The primary structure comprises 257 residues: Fructose-2,6-bisphosphatase TIGAR B (257 aa).

His-11 acts as the Tele-phosphohistidine intermediate in catalysis. Glu-89 (proton donor/acceptor) is an active-site residue.

The protein belongs to the phosphoglycerate mutase family.

It is found in the cytoplasm. The protein localises to the nucleus. The protein resides in the mitochondrion. The catalysed reaction is beta-D-fructose 2,6-bisphosphate + H2O = beta-D-fructose 6-phosphate + phosphate. Functionally, fructose-bisphosphatase hydrolyzing fructose-2,6-bisphosphate as well as fructose-1,6-bisphosphate. Acts as a negative regulator of glycolysis by lowering intracellular levels of fructose-2,6-bisphosphate in a p53/TP53-dependent manner, resulting in the pentose phosphate pathway (PPP) activation and NADPH production. Contributes to the generation of reduced glutathione to cause a decrease in intracellular reactive oxygen species (ROS) content, correlating with its ability to protect cells from oxidative or metabolic stress-induced cell death. May play a role in mitophagy inhibition. This is Fructose-2,6-bisphosphatase TIGAR B from Danio rerio (Zebrafish).